The following is a 173-amino-acid chain: RNA pyrophosphohydrolase (173 aa).

One can recognise a Nudix hydrolase domain in the interval 6-149; the sequence is GFRANVGIII…KRDVYRKVMK (144 aa). The Nudix box signature appears at 38-59; sequence GGVDDGETPEEAMYRELYEEVG.

It belongs to the Nudix hydrolase family. RppH subfamily. The cofactor is a divalent metal cation.

Its function is as follows. Accelerates the degradation of transcripts by removing pyrophosphate from the 5'-end of triphosphorylated RNA, leading to a more labile monophosphorylated state that can stimulate subsequent ribonuclease cleavage. The protein is RNA pyrophosphohydrolase of Shewanella woodyi (strain ATCC 51908 / MS32).